Reading from the N-terminus, the 1679-residue chain is AF4/FMR2 family member lilli (1679 aa).

Disordered stretches follow at residues 1-21 (MAQQ…SSIN), 55-78 (NYNM…QQGI), 124-305 (RSAP…EKDV), 406-539 (LHQL…GAQN), 580-609 (MGAG…SNKW), 733-755 (DSGT…AVGG), 783-1172 (QPTQ…TTPH), and 1197-1319 (TPAQ…LQIG). A compositionally biased stretch (basic and acidic residues) spans 69 to 78 (REKIERQQGI). Low complexity-rich tracts occupy residues 144–181 (SLGH…QQQQ) and 212–244 (PSSS…SSGG). Phosphothreonine is present on threonine 421. Basic and acidic residues predominate over residues 429-442 (LKTEKNHSLEKQDS). Residues 444–455 (LENDLELSESED) are compositionally biased toward acidic residues. Phosphoserine occurs at positions 451 and 453. A compositionally biased stretch (low complexity) spans 464–484 (SAGNSSNSSESDSSESGSESS). Over residues 492-501 (HPNHQQHHHQ) the composition is skewed to basic residues. The segment covering 502–532 (LQQQQQQQQQQASMQQQQVLQQQQQHRPQPL) has biased composition (low complexity). Gly residues predominate over residues 582–591 (AGSGSGGTLS). A compositionally biased stretch (polar residues) spans 598–609 (NKTPSPTESNKW). Positions 733 to 752 (DSGTSASGSSSSSSSSSDSA) are enriched in low complexity. The span at 783-796 (QPTQSQKAPPSNSV) shows a compositional bias: polar residues. Residues 810 to 820 (QRQKKPRKKKA) show a composition bias toward basic residues. 2 positions are modified to phosphoserine: serine 829 and serine 830. The segment at residues 859 to 871 (KKGRGRPRKQQQS) is a DNA-binding region (a.T hook). A compositionally biased stretch (low complexity) spans 868–906 (QQQSGGSGNLSSASAGSSSQTKGPTLTAAKKPLAKTPLA). 2 positions are modified to phosphoserine: serine 879 and serine 881. Positions 917–927 (SQSSSNGNTPT) are enriched in polar residues. Composition is skewed to low complexity over residues 957 to 973 (SSSA…SSSS) and 1001 to 1012 (GSGSSSPSSSGS). The span at 1019 to 1030 (TRSQVGSGQALA) shows a compositional bias: polar residues. Positions 1042–1068 (SQHSQHLSSSECSSSSGGCTAVCSSSS) are enriched in low complexity. Residues 1073 to 1090 (EGRREKERERKPKSDKNK) are compositionally biased toward basic and acidic residues. The span at 1130-1140 (QPPPPQAPPAA) shows a compositional bias: pro residues. The span at 1198-1213 (PAQQNGHLTPKDQATN) shows a compositional bias: polar residues. Basic and acidic residues-rich tracts occupy residues 1234-1251 (EHPV…EAKF) and 1260-1288 (FQLK…EQPP). Serine 1368 is subject to Phosphoserine. Threonine 1370 bears the Phosphothreonine mark. The span at 1569–1589 (GNTPSSISPSNSVGSQGSGSN) shows a compositional bias: low complexity. The disordered stretch occupies residues 1569–1594 (GNTPSSISPSNSVGSQGSGSNTPPGR).

The protein belongs to the AF4 family.

The protein localises to the nucleus. In terms of biological role, has a role in transcriptional regulation. Acts in parallel with the Ras/MAPK and the PI3K/PKB pathways in the control of cell identity and cellular growth. Essential for regulation of the cytoskeleton and cell growth but not for cell proliferation or growth rate. Required specifically for the microtubule-based basal transport of lipid droplets. Plays a partially redundant function downstream of Raf in cell fate specification in the developing eye. Pair-rule protein that regulates embryonic cellularization, gastrulation and segmentation. The sequence is that of AF4/FMR2 family member lilli from Drosophila erecta (Fruit fly).